Reading from the N-terminus, the 409-residue chain is Terpredoxin reductase (409 aa).

Residue 7-38 (TTVIVGAGHAGTAAAFFLREFGYHGRVLLLSA) coordinates FAD. An NAD(+)-binding site is contributed by 151–159 (GGGFIGLEI).

FAD serves as cofactor.

Functionally, the oxidation of alpha-terpineol by cytochrome p450-TERP requires the participation of a flavoprotein, terpredoxin reductase, and an iron-sulfur protein, terpredoxin, to mediate the transfer of electrons from NADH to P450 for oxygen activation. The polypeptide is Terpredoxin reductase (terPA) (Pseudomonas sp).